The following is a 103-amino-acid chain: MYALVEINGKQYKAIEGEFLKIDKISPVEKDKLEFNSVLLINKDGEVKIGKPYVVNSLIRCTYKEDKKDKKVVSYRYRRRKSSERKVGHRQTYSYILVDEIVF.

Belongs to the bacterial ribosomal protein bL21 family. Part of the 50S ribosomal subunit. Contacts protein L20.

Its function is as follows. This protein binds to 23S rRNA in the presence of protein L20. This is Large ribosomal subunit protein bL21 from Borreliella burgdorferi (strain ZS7) (Borrelia burgdorferi).